The sequence spans 513 residues: MAAAIAVVYLSLLLLLLHGAAPAVLGYTRGDFPEDFVFGSATSSYQYEGGFDEDGRSPSNWDIFTHQGKMPGRSTADVAADGYHKYKDDLKLMVDTNLEAYRLSISWSRIIPNGRGDVNPKGLQYYNDIIDGLVKNGIQVHIMLYQLDLPQVLEDEYDGWLSPRILEDFKAYADVCFKEFGDRVAHWITIDEPNVASIGSYDSGQLAPGRCSDPFGIRKCTVGNSSVEPYIAVHNMLLAHASVTKLYREKYQVAGKGIIGISVYTFWAYPLTNSTVDLEATKRCQDFIVHWVLRPLVFGDYPQVMKNIVGSRLPSFTKAQSEDVKGSLDFIGMNHYYSLYVNDRPLGKGTRDFVADISIYYRGSKTDPPPGKAAPTSIGPDPQGLRLMVQYLQETYGNLPIYILENGYGSSNDTVHDNDRVDYLKSYIGSILTALRNGANVKGYFVWSFVDVFEYLTGYGQSYGLYRVDFADESRPRQARLSARWYSGFLKNREMDVDQSELAMAAAESRAQQ.

A signal peptide spans 1 to 26 (MAAAIAVVYLSLLLLLLHGAAPAVLG). Residue Q46 coordinates a beta-D-glucoside. E192 serves as the catalytic Proton donor. C211 and C220 form a disulfide bridge. Residues N224 and N273 are each glycosylated (N-linked (GlcNAc...) asparagine). Residues Y336 and E405 each coordinate a beta-D-glucoside. The active-site Nucleophile is E405. N-linked (GlcNAc...) asparagine glycosylation occurs at N412. Residues W447, 454-455 (EY), and Y463 contribute to the a beta-D-glucoside site.

It belongs to the glycosyl hydrolase 1 family.

It carries out the reaction Hydrolysis of terminal, non-reducing beta-D-glucosyl residues with release of beta-D-glucose.. This Oryza sativa subsp. japonica (Rice) protein is Beta-glucosidase 5 (BGLU5).